A 654-amino-acid chain; its full sequence is Chaperone protein DnaK (654 aa).

The residue at position 205 (Thr205) is a Phosphothreonine; by autocatalysis. A disordered region spans residues 592–654 (ELERQMQQIG…EVEILDDKKP (63 aa)). The segment covering 608–621 (AGQSETQSTGPGSY) has biased composition (polar residues). A compositionally biased stretch (low complexity) spans 622–636 (QESSNQSSQHQTNNN).

The protein belongs to the heat shock protein 70 family.

In terms of biological role, acts as a chaperone. In Protochlamydia amoebophila (strain UWE25), this protein is Chaperone protein DnaK.